The sequence spans 495 residues: Flagellin (495 aa).

This sequence belongs to the bacterial flagellin family.

The protein resides in the secreted. It is found in the bacterial flagellum. Functionally, flagellin is the subunit protein which polymerizes to form the filaments of bacterial flagella. This is Flagellin (fliC) from Salmonella typhimurium (strain LT2 / SGSC1412 / ATCC 700720).